Consider the following 58-residue polypeptide: Protein translocase subunit SecE (58 aa).

Residues 38-58 (IVMAFVGLLAYLIQLVLAFII) form a helical membrane-spanning segment.

Belongs to the SecE/SEC61-gamma family. As to quaternary structure, component of the Sec protein translocase complex. Heterotrimer consisting of SecY (alpha), SecG (beta) and SecE (gamma) subunits. The heterotrimers can form oligomers, although 1 heterotrimer is thought to be able to translocate proteins. Interacts with the ribosome. May interact with SecDF, and other proteins may be involved.

The protein resides in the cell membrane. Its function is as follows. Essential subunit of the Sec protein translocation channel SecYEG. Clamps together the 2 halves of SecY. May contact the channel plug during translocation. This chain is Protein translocase subunit SecE, found in Acidianus ambivalens (Desulfurolobus ambivalens).